We begin with the raw amino-acid sequence, 249 residues long: Long form salivary protein D7L (249 aa).

Residues 1–19 form the signal peptide; sequence MNAVITSLVFISLVGVGYS. 2 disulfides stabilise this stretch: Cys36–Cys66 and Cys62–Cys112. Trp49 is a binding site for thromboxane A2. Trp52 provides a ligand contact to leukotriene C4. Tyr63 serves as a coordination point for thromboxane A2. Leukotriene C4-binding residues include Gly136 and Lys154. Lys154 contributes to the thromboxane A2 binding site. Cystine bridges form between Cys162/Cys178, Cys174/Cys221, and Cys211/Cys230.

It belongs to the PBP/GOBP family.

It is found in the secreted. In terms of biological role, modulates blood feeding of female sandflies on vertebrate species by binding and sequestering different mediators involved in the host response. Binds leukotriene C4, leukotriene D4, leukotriene E4 and U-46619, a stable analog of thromboxane A2. Does not bind histamine or serotonin. Inhibits platelet aggregation induced by low concentrations of collagen in thromboxane A2-dependent manner. The chain is Long form salivary protein D7L from Phlebotomus duboscqi (Sandfly).